The following is a 62-amino-acid chain: Large ribosomal subunit protein uL30 (62 aa).

The protein belongs to the universal ribosomal protein uL30 family. Part of the 50S ribosomal subunit.

This is Large ribosomal subunit protein uL30 from Geobacillus thermodenitrificans (strain NG80-2).